We begin with the raw amino-acid sequence, 509 residues long: MSKRNSTKNDIKLSDVGVAQWMDYQIILQEWKIGKLSSEIKNSIVKDMSSLSEFRGQSINANELESMIGDWSIYPITNKFKIIALWKIIENHRNKHNLGYILKSNVLEKTNKSKQNNNGFNGHKGNFSENEIRKTNNYRIIKKQKIEFEKNNKNTIITRKNNNNNNSNNNNNNNNNYNQKSNTTMDNNYSDDDYQNEQNEFEEEDYDSNDDENDSHDENENFNIIKPKTTNQLKRKVSSSFTNNNYHVNNNNNNNDNINNFNSNSNSNTSNNNNNNNSDNNINNNNNNNNNNNNNNNNNNNNNNNNNNNNNNINNNYINNNNNDSWNNQFQNQLMYCNNYQAQYQQLHPNHYQLQYQQQQQNINNNINANNNNNNNNNNNNNNNLNDSTPNNQTNNDLKSSNHSNYDFNYNTNERLSHSPIQTHSSSNNSTPSNQSPTFPSNYISQNANINYNPNQGSMFYPPQQFYVESMFYQQQLQQQQQQQQQIAQQPVSQQNNNVETNQDNVQQQ.

4 disordered regions span residues 112 to 131, 152 to 325, 365 to 457, and 488 to 509; these read KSKQ…SENE, NKNT…NNDS, NNIN…PNQG, and AQQP…VQQQ. Composition is skewed to low complexity over residues 116–127 and 153–184; these read NNNGFNGHKGNF and KNTI…SNTT. The segment covering 189–217 has biased composition (acidic residues); it reads YSDDDYQNEQNEFEEEDYDSNDDENDSHD. The span at 228-242 shows a compositional bias: polar residues; it reads KTTNQLKRKVSSSFT. Composition is skewed to low complexity over residues 243 to 325 and 365 to 397; these read NNNY…NNDS and NNIN…TNND. Residues 398 to 422 are compositionally biased toward polar residues; it reads LKSSNHSNYDFNYNTNERLSHSPIQ. The segment covering 423–442 has biased composition (low complexity); it reads THSSSNNSTPSNQSPTFPSN. 2 stretches are compositionally biased toward polar residues: residues 443–457 and 496–509; these read YISQ…PNQG and NNNV…VQQQ.

This is an uncharacterized protein from Dictyostelium discoideum (Social amoeba).